Reading from the N-terminus, the 323-residue chain is uncharacterized protein (323 aa).

Disordered regions lie at residues A185–W214 and G271–L294.

It belongs to the IGBP1/TAP42 family.

This is an uncharacterized protein from Schizosaccharomyces pombe (strain 972 / ATCC 24843) (Fission yeast).